We begin with the raw amino-acid sequence, 350 residues long: Induced myeloid leukemia cell differentiation protein Mcl-1 (350 aa).

Residues lysine 5 and lysine 40 each participate in a glycyl lysine isopeptide (Lys-Gly) (interchain with G-Cter in ubiquitin) cross-link. The tract at residues glutamate 47 to proline 87 is disordered. Residues glycine 50 to alanine 61 are compositionally biased toward gly residues. The tract at residues arginine 104 to tyrosine 175 is PEST-like. At serine 121 the chain carries Phosphoserine. Lysine 136 participates in a covalent cross-link: Glycyl lysine isopeptide (Lys-Gly) (interchain with G-Cter in ubiquitin). The tract at residues glycine 148 to glutamate 171 is disordered. Polar residues predominate over residues serine 150 to proline 161. Serine 159 carries the post-translational modification Phosphoserine; by GSK3-alpha and GSK3-beta. The residue at position 162 (serine 162) is a Phosphoserine. The residue at position 163 (threonine 163) is a Phosphothreonine; by MAPK. Glycyl lysine isopeptide (Lys-Gly) (interchain with G-Cter in ubiquitin) cross-links involve residues lysine 194 and lysine 197. The BH3 signature appears at alanine 209–asparagine 223. Positions histidine 252–alanine 272 match the BH1 motif. A BH2 motif is present at residues aspartate 304–phenylalanine 319. Residues isoleucine 328–leucine 348 form a helical membrane-spanning segment.

It belongs to the Bcl-2 family. Interacts with HIF3A (via C-terminus domain). Interacts with BAD, BOK, BIK and BMF. Interacts with PMAIP1. Interacts with BBC3. Isoform 1 interacts with BAX, BAK1 and TPT1. Heterodimer of isoform 1 and isoform 2. Homodimers of isoform 1 or isoform 2 are not detected. Isoform 2 does not interact with pro-apoptotic BCL2-related proteins. Interacts with RTL10/BOP. Interacts with BCL2L11; may sequester BCL2L11 to prevent its pro-apoptotic activity. Interacts with GIMAP5 and HSPA8/HSC70; the interaction between HSPA8 and MCL1 is impaired in the absence of GIMAP5. Post-translationally, cleaved by CASP3 during apoptosis. In intact cells cleavage occurs preferentially after Asp-127, yielding a pro-apoptotic 28 kDa C-terminal fragment. Rapidly degraded in the absence of phosphorylation on Thr-163 in the PEST region. In terms of processing, phosphorylated on Ser-159, by GSK3, in response to IL3/interleukin-3 withdrawal. Phosphorylation at Ser-159 induces ubiquitination and proteasomal degradation, abrogating the anti-apoptotic activity. Treatment with taxol or okadaic acid induces phosphorylation on additional sites. Post-translationally, ubiquitinated. Ubiquitination is induced by phosphorylation at Ser-159. Deubiquitinated by USP20; leading to increased stability.

It is found in the membrane. Its subcellular location is the cytoplasm. The protein resides in the mitochondrion. The protein localises to the nucleus. It localises to the nucleoplasm. Its function is as follows. Involved in the regulation of apoptosis versus cell survival, and in the maintenance of viability but not of proliferation. Mediates its effects by interactions with a number of other regulators of apoptosis. Isoform 1 inhibits apoptosis. Isoform 2 promotes apoptosis. The protein is Induced myeloid leukemia cell differentiation protein Mcl-1 (MCL1) of Homo sapiens (Human).